The sequence spans 82 residues: Small ribosomal subunit protein uS17 (82 aa).

Belongs to the universal ribosomal protein uS17 family. Part of the 30S ribosomal subunit.

One of the primary rRNA binding proteins, it binds specifically to the 5'-end of 16S ribosomal RNA. This is Small ribosomal subunit protein uS17 from Shewanella pealeana (strain ATCC 700345 / ANG-SQ1).